The following is a 396-amino-acid chain: NADH-quinone oxidoreductase subunit D 2 (396 aa).

The protein belongs to the complex I 49 kDa subunit family. NDH-1 is composed of 14 different subunits. Subunits NuoB, C, D, E, F, and G constitute the peripheral sector of the complex.

The protein localises to the cell inner membrane. It carries out the reaction a quinone + NADH + 5 H(+)(in) = a quinol + NAD(+) + 4 H(+)(out). Functionally, NDH-1 shuttles electrons from NADH, via FMN and iron-sulfur (Fe-S) centers, to quinones in the respiratory chain. The immediate electron acceptor for the enzyme in this species is believed to be ubiquinone. Couples the redox reaction to proton translocation (for every two electrons transferred, four hydrogen ions are translocated across the cytoplasmic membrane), and thus conserves the redox energy in a proton gradient. The chain is NADH-quinone oxidoreductase subunit D 2 from Beijerinckia indica subsp. indica (strain ATCC 9039 / DSM 1715 / NCIMB 8712).